Consider the following 306-residue polypeptide: tRNA (guanine-N(1)-)-methyltransferase (306 aa).

Residues glycine 157 and isoleucine 182–leucine 187 each bind S-adenosyl-L-methionine.

It belongs to the RNA methyltransferase TrmD family. In terms of assembly, homodimer.

It is found in the cytoplasm. The catalysed reaction is guanosine(37) in tRNA + S-adenosyl-L-methionine = N(1)-methylguanosine(37) in tRNA + S-adenosyl-L-homocysteine + H(+). In terms of biological role, specifically methylates guanosine-37 in various tRNAs. The chain is tRNA (guanine-N(1)-)-methyltransferase from Bifidobacterium adolescentis (strain ATCC 15703 / DSM 20083 / NCTC 11814 / E194a).